A 347-amino-acid chain; its full sequence is Globoside alpha-1,3-N-acetylgalactosaminyltransferase 1 (347 aa).

Residues M1–R5 lie on the Cytoplasmic side of the membrane. Residues L6–Y26 form a helical; Signal-anchor for type II membrane protein membrane-spanning segment. At M27–S347 the chain is on the lumenal side. N108 is a glycosylation site (N-linked (GlcNAc...) asparagine). Substrate is bound by residues F116–Y121, D206–D208, and H228–Y231. Mn(2+) contacts are provided by D206 and D208. Catalysis depends on E298, which acts as the Nucleophile.

The protein belongs to the glycosyltransferase 6 family. It depends on Mn(2+) as a cofactor.

Its subcellular location is the golgi apparatus membrane. It catalyses the reaction a globoside Gb4Cer (d18:1(4E)) + UDP-N-acetyl-alpha-D-galactosamine = a globoside Forssman (d18:1(4E)) + UDP + H(+). It carries out the reaction a globoside Gb4Cer + UDP-N-acetyl-alpha-D-galactosamine = a globoside IV3GalNAc-Gb4Cer + UDP + H(+). It participates in protein modification; protein glycosylation. In terms of biological role, catalyzes the formation of Forssman glycolipid via the addition of N-acetylgalactosamine (GalNAc) in alpha-1,3-linkage to GalNAcb-1,3Gala-1,4Galb-1,4GlcCer (Gb4Cer). Forssman glycolipid (also called Forssman antigen; FG) probably serves for adherence of some pathogens such as E.coli uropathogenic strains. This chain is Globoside alpha-1,3-N-acetylgalactosaminyltransferase 1, found in Canis lupus familiaris (Dog).